Here is a 181-residue protein sequence, read N- to C-terminus: Large ribosomal subunit protein uL5c (181 aa).

This sequence belongs to the universal ribosomal protein uL5 family. In terms of assembly, part of the 50S ribosomal subunit; contacts the 5S rRNA.

The protein localises to the plastid. The protein resides in the chloroplast. Binds 5S rRNA, forms part of the central protuberance of the 50S subunit. The chain is Large ribosomal subunit protein uL5c (rpl5) from Guillardia theta (Cryptophyte).